Consider the following 151-residue polypeptide: Putative pre-16S rRNA nuclease (151 aa).

It belongs to the YqgF nuclease family.

It localises to the cytoplasm. Functionally, could be a nuclease involved in processing of the 5'-end of pre-16S rRNA. The chain is Putative pre-16S rRNA nuclease from Nostoc sp. (strain PCC 7120 / SAG 25.82 / UTEX 2576).